We begin with the raw amino-acid sequence, 484 residues long: ATP synthase subunit beta (484 aa).

168 to 175 (GGAGVGKT) is a binding site for ATP.

This sequence belongs to the ATPase alpha/beta chains family. As to quaternary structure, F-type ATPases have 2 components, CF(1) - the catalytic core - and CF(0) - the membrane proton channel. CF(1) has five subunits: alpha(3), beta(3), gamma(1), delta(1), epsilon(1). CF(0) has three main subunits: a(1), b(2) and c(9-12). The alpha and beta chains form an alternating ring which encloses part of the gamma chain. CF(1) is attached to CF(0) by a central stalk formed by the gamma and epsilon chains, while a peripheral stalk is formed by the delta and b chains.

It localises to the cell membrane. It carries out the reaction ATP + H2O + 4 H(+)(in) = ADP + phosphate + 5 H(+)(out). In terms of biological role, produces ATP from ADP in the presence of a proton gradient across the membrane. The catalytic sites are hosted primarily by the beta subunits. This chain is ATP synthase subunit beta, found in Pseudarthrobacter chlorophenolicus (strain ATCC 700700 / DSM 12829 / CIP 107037 / JCM 12360 / KCTC 9906 / NCIMB 13794 / A6) (Arthrobacter chlorophenolicus).